A 328-amino-acid chain; its full sequence is Homeobox protein Hox-D1 (328 aa).

An Antp-type hexapeptide motif is present at residues Thr-204 to Lys-209. The homeobox DNA-binding region spans Ser-229–Glu-288. A disordered region spans residues Pro-305–Ser-328. The segment covering Gly-319–Ser-328 has biased composition (polar residues).

Belongs to the Antp homeobox family. Labial subfamily.

It is found in the nucleus. Sequence-specific transcription factor which is part of a developmental regulatory system that provides cells with specific positional identities on the anterior-posterior axis. Acts on the anterior body structures. The polypeptide is Homeobox protein Hox-D1 (HOXD1) (Homo sapiens (Human)).